Here is a 988-residue protein sequence, read N- to C-terminus: Chloride channel protein 1 (988 aa).

At 1 to 118 the chain is on the cytoplasmic side; it reads MEQSRSQQRG…VVRRKLGEDG (118 aa). Residues 65 to 75 are compositionally biased toward basic and acidic residues; that stretch reads HKEQFSDREQD. The tract at residues 65-92 is disordered; the sequence is HKEQFSDREQDIGMPKKTGSSSTVDSKD. A helical transmembrane segment spans residues 119–150; it reads IFLVLLGLLMALVSWSMDYVSAKSLQAYKWSY. The Extracellular segment spans residues 151–158; sequence AQMQPSLP. The helical transmembrane segment at 159 to 179 threads the bilayer; it reads LQFLVWVTFPLVLILFSALFC. Topologically, residues 180 to 183 are cytoplasmic; the sequence is HLIS. Positions 184–189 form an intramembrane region, note=Loop between two helices; that stretch reads PQAVGS. Positions 188–192 match the Selectivity filter part_1 motif; it reads GSGIP. Ser-189 contributes to the chloride binding site. An intramembrane region (helical) is located at residues 190 to 195; that stretch reads GIPEMK. The Cytoplasmic portion of the chain corresponds to 196–208; sequence TILRGVVLKEYLT. An intramembrane region (helical) is located at residues 209 to 224; that stretch reads MKAFVAKVVALTAGLG. The note=Loop between two helices intramembrane region spans 225–230; it reads SGIPVG. Residues 230-234 carry the Selectivity filter part_2 motif; the sequence is GKEGP. An intramembrane region (helical) is located at residues 231–246; it reads KEGPFVHIASICAAVL. Topologically, residues 247-268 are cytoplasmic; sequence SKFMSVFCGVYEQPYYYSDILT. 2 consecutive intramembrane regions (helical) follow at residues 269–280 and 281–290; these read VGCAVGVGCCFG and TPLGGVLFSI. Residues 291–301 are Cytoplasmic-facing; it reads EVTSTYFAVRN. A helical membrane pass occupies residues 302–321; that stretch reads YWRGFFAATFSAFVFRVLAV. Over 322–347 the chain is Extracellular; that stretch reads WNKDAVTITALFRTNFRMDFPFDLKE. Residues 348-376 traverse the membrane as a helical segment; it reads LPAFAAIGICCGLLGAVFVYLHRQVMLGV. The Cytoplasmic segment spans residues 377 to 390; it reads RKHKALSQFLAKHR. A helical transmembrane segment spans residues 391 to 408; that stretch reads LLYPGIVTFVIASFTFPP. The Extracellular portion of the chain corresponds to 409-414; sequence GMGQFM. The segment at residues 415-418 is an intramembrane region (note=Loop between two helices); the sequence is AGEL. The helical intramembrane region spans 419–426; the sequence is MPREAIST. Over 427–457 the chain is Extracellular; the sequence is LFDNNTWVKHAGDPESLGQSAVWIHPRVNVV. Positions 458–475 form an intramembrane region, helical; it reads IIIFLFFVMKFWMSIVAT. The segment at residues 476 to 482 is an intramembrane region (note=Loop between two helices); the sequence is TMPIPCG. The Selectivity filter part_3 signature appears at 482–486; the sequence is GGFMP. The helical intramembrane region spans 483 to 498; the sequence is GFMPVFVLGAAFGRLV. Phe-484 is a binding site for chloride. The Extracellular portion of the chain corresponds to 499 to 521; sequence GEIMAMLFPDGILFDDIIYKILP. Positions 522–538 form an intramembrane region, helical; it reads GGYAVIGAAALTGAVSH. The note=Loop between two helices intramembrane region spans 539-540; the sequence is TV. The helical intramembrane region spans 541–554; that stretch reads STAVICFELTGQIA. At 555-557 the chain is on the extracellular side; sequence HIL. An intramembrane region (helical) is located at residues 558–571; the sequence is PMMVAVILANMVAQ. The segment at residues 572-575 is an intramembrane region (note=Loop between two helices); the sequence is SLQP. The segment at residues 576 to 578 is an intramembrane region (helical); sequence SLY. Tyr-578 contacts chloride. At 579–988 the chain is on the cytoplasmic side; it reads DSIIQVKKLP…DEEDEDELIL (410 aa). One can recognise a CBS 1 domain in the interval 609–668; that stretch reads MVRDVKFVSASYTYGELRTLLQTTTVKTLPLVDSKDSMILLGSVERSELQALLQRHLCPE. Residues 713 to 764 form a disordered region; sequence EDEDEDLSGKSELPPSLALHPSTTAPLSPEEPNGPLPGHKQQPEAPEPAGQR. The region spanning 821–876 is the CBS 2 domain; it reads IDQSPFQLVEQTTLHKTHTLFSLLGLHLAYVTSMGKLRGVLALEELQKAIEGHTKS. A disordered region spans residues 880–988; the sequence is LRPPLASFRN…DEEDEDELIL (109 aa). Ser-886 is subject to Phosphoserine. Positions 887–906 are enriched in polar residues; the sequence is FRNTTSTRKSTGAPPSSAEN. Residues 929–941 are compositionally biased toward pro residues; that stretch reads TPVPSPSPEPPLS. Acidic residues-rich tracts occupy residues 950–967 and 979–988; these read ELEE…EELA and DEEDEDELIL.

The protein belongs to the chloride channel (TC 2.A.49) family. ClC-1/CLCN1 subfamily. In terms of assembly, homodimer. In terms of tissue distribution, predominantly expressed in skeletal muscles.

The protein localises to the cell membrane. The protein resides in the sarcolemma. Its subcellular location is the T-tubule. It catalyses the reaction chloride(in) = chloride(out). It carries out the reaction thiocyanate(in) = thiocyanate(out). The catalysed reaction is bromide(in) = bromide(out). The enzyme catalyses nitrate(in) = nitrate(out). It catalyses the reaction iodide(out) = iodide(in). With respect to regulation, modulated by membrane voltage with depolarization favouring channel opening and hyperpolarization favouring channel closure. Inhibited by acidic pH and ATP binding due to a shift of voltage dependence of common gating to more positive voltages. Inhibited by 9-anthracene-carboxylic. In terms of biological role, voltage-gated chloride channel involved in skeletal muscle excitability. Generates most of the plasma membrane chloride conductance in skeletal muscle fibers, stabilizes the resting membrane potential and contributes to the repolarization phase during action potential firing. Forms a homodimeric channel where each subunit has its own ion conduction pathway. Conducts double-barreled currents controlled by two types of gates, two fast glutamate gates that control each subunit independently and a slow common gate that opens and shuts off both subunits simultaneously. Has a significant open probability at muscle resting potential and is further activated upon membrane depolarization. Permeable to small monovalent anions with ion selectivity for chloride &gt; thiocyanate &gt; bromide &gt; nitrate &gt; iodide. This Homo sapiens (Human) protein is Chloride channel protein 1.